The chain runs to 88 residues: MALQADFDRAAEDVRKLKARPDDGELKELYGLYKQAIVGDINIACPGMLDLKGKAKWEAWNLKKGLSTEDATSAYISKAKELIEKYGI.

The 86-residue stretch at 3-88 (LQADFDRAAE…AKELIEKYGI (86 aa)) folds into the ACB domain. An acyl-CoA-binding positions include R15, 30–34 (YGLYK), K56, and Y75.

It belongs to the ACBD7 family.

Functionally, binds medium- and long-chain acyl-CoA esters. This chain is Acyl-CoA-binding domain-containing protein 7 (ACBD7), found in Homo sapiens (Human).